Consider the following 173-residue polypeptide: MDLKATIRTLPNWPIEGVMFRDITTLLQDPAAFKEAINRFYDRYRTMKIDKIVGIDARGLIFGAPLAYKLEVGFVPVRKKGKIPFRTIGAAYSLEYGESMVEIHEDAILKGERVVVVDDLIATGGTVKATIDLVEKLGGEVVECAFVIDLPDLKGREKIRDYKMFALMEFEGE.

The protein belongs to the purine/pyrimidine phosphoribosyltransferase family. As to quaternary structure, homodimer.

The protein localises to the cytoplasm. It catalyses the reaction AMP + diphosphate = 5-phospho-alpha-D-ribose 1-diphosphate + adenine. It participates in purine metabolism; AMP biosynthesis via salvage pathway; AMP from adenine: step 1/1. Functionally, catalyzes a salvage reaction resulting in the formation of AMP, that is energically less costly than de novo synthesis. This Desulfosudis oleivorans (strain DSM 6200 / JCM 39069 / Hxd3) (Desulfococcus oleovorans) protein is Adenine phosphoribosyltransferase.